The following is a 262-amino-acid chain: Dimeric xanthone biosynthesis cluster protein R11 (262 aa).

The hemerythrin-like stretch occupies residues 69–160; the sequence is IADLLFYTKT…PQLFKHLNDE (92 aa).

The protein operates within secondary metabolite biosynthesis. Its function is as follows. Part of the gene cluster that mediates the biosynthesis of the dimeric xanthones cryptosporioptides. The pathway begins with the synthesis of atrochrysone thioester by the polyketide synthase dmx-nrPKS. The atrochrysone carboxyl ACP thioesterase dmxR1 then breaks the thioester bond and releases the atrochrysone carboxylic acid from dmx-nrPKS. Atrochrysone carboxylic acid is decarboxylated by the decarboxylase dmxR15, and oxidized by the anthrone oxygenase dmxR16 to yield emodin. Emodin is then reduced to emodin hydroquinone by the oxidoreductase dmxR7. A-ring reduction by the short chain dehydrogenase dmxR18, dehydration by the scytalone dehydratase-like protein dmxR17 and probable spontaneous re-oxidation, results in overall deoxygenation to chrysophanol. Baeyer-Villiger oxidation by the Baeyer-Villiger monooxygenase (BVMO) dmxR6 then yields monodictylactone in equilibrium with monodictyphenone. In the case of the cryptosporioptides biosynthesis, monodictylactone is reduced at C-12 to an alcohol (by the short chain dehydrogenases dmxR12 or dmxR8) and hydroxylated at C-5 by dmxR9, yielding the electron-rich aromatic which could eliminate H(2)O to form the ortho-quinonemethide, followed by tautomerisation to paraquinone and complete the formal reduction to produce the 10-methylgroup. Conjugate addition of C-4a-OH to the resulting paraquinone by the monooxygenase dmxR10 then gives cyclohexadienone, which is then reduced at C-5 by the short chain dehydrogenase dmxR3 to give the dihydroxanthone. The 6,7-epoxide in the cryptosporioptides could be introduced by the cytochrome P450 monooxygenase dmxL3. The highly reducing PKS dmxL2 manufactures butyrate, which is further carboxylated by dmxL1 to form ethylmalonate. It is not yet clear whether the carboxylation occurs while the butyrate is attached to the ACP of dmxL2, but this unusual fungal metabolite could then be esterified to O-5 by the O-acetyltransferase dmxR13. Finally, dimerization performed by dmxR5 gives the observed dimers cryptosporioptides A, B and C as the final products of the pathway. The sequence is that of Dimeric xanthone biosynthesis cluster protein R11 from Cryptosporiopsis sp. (strain 8999).